We begin with the raw amino-acid sequence, 282 residues long: MILIDGKSLSKDLKERLATQVQEYKHHTAITPKLVAIIVGNDPASKTYVASKEKACAQVGIDSQVITLPEHTTESELLELIDQLNNDSSVHAILVQLPLPAHINKNNVIYSIKPEKDVDGFHPTNVGRLQLRDKKCLESCTPKGIMTMLREYGIKTEGAYAVVVGASNVVGKPVSQLLLNAKATVTTCHRFTTDLKSHTTKADILIVAVGKPNFITADMVKEGAVVIDVGINHVDGKIVGDVDFAAVKDKVAAITPVPGGVGPMTITELLYNTFQCAQELNR.

Residues 165–167 (GAS) and Ile231 contribute to the NADP(+) site.

This sequence belongs to the tetrahydrofolate dehydrogenase/cyclohydrolase family. As to quaternary structure, homodimer.

It carries out the reaction (6R)-5,10-methylene-5,6,7,8-tetrahydrofolate + NADP(+) = (6R)-5,10-methenyltetrahydrofolate + NADPH. The enzyme catalyses (6R)-5,10-methenyltetrahydrofolate + H2O = (6R)-10-formyltetrahydrofolate + H(+). It functions in the pathway one-carbon metabolism; tetrahydrofolate interconversion. Functionally, catalyzes the oxidation of 5,10-methylenetetrahydrofolate to 5,10-methenyltetrahydrofolate and then the hydrolysis of 5,10-methenyltetrahydrofolate to 10-formyltetrahydrofolate. The polypeptide is Bifunctional protein FolD (Francisella tularensis subsp. tularensis (strain FSC 198)).